A 137-amino-acid polypeptide reads, in one-letter code: Nucleoside diphosphate kinase (137 aa).

ATP-binding residues include Lys-11, Phe-59, Arg-87, Thr-93, Arg-104, and Asn-114. His-117 functions as the Pros-phosphohistidine intermediate in the catalytic mechanism.

The protein belongs to the NDK family. Homotetramer. Requires Mg(2+) as cofactor.

Its subcellular location is the cytoplasm. It catalyses the reaction a 2'-deoxyribonucleoside 5'-diphosphate + ATP = a 2'-deoxyribonucleoside 5'-triphosphate + ADP. It carries out the reaction a ribonucleoside 5'-diphosphate + ATP = a ribonucleoside 5'-triphosphate + ADP. Functionally, major role in the synthesis of nucleoside triphosphates other than ATP. The ATP gamma phosphate is transferred to the NDP beta phosphate via a ping-pong mechanism, using a phosphorylated active-site intermediate. The sequence is that of Nucleoside diphosphate kinase from Frankia alni (strain DSM 45986 / CECT 9034 / ACN14a).